We begin with the raw amino-acid sequence, 68 residues long: Peptide Smp13 (68 aa).

Residues 1–23 form the signal peptide; sequence MKTQFAIFLITLVLFQMFSQSDA. F36 is modified (phenylalanine amide). The propeptide occupies 37 to 68; the sequence is GKRGLGDHDDLDELFDGEISQADIDFLKEIMQ.

The protein belongs to the non-disulfide-bridged peptide (NDBP) superfamily. Short antimicrobial peptide (group 4) family. Expressed by the venom gland.

It localises to the secreted. In terms of biological role, peptide with unknown function. Does not show antimicrobial activity against the Gram-positive, and Gram-negative bacteria tested, as well as against the fungus C.albicans. This Scorpio palmatus (Israeli golden scorpion) protein is Peptide Smp13.